Here is a 453-residue protein sequence, read N- to C-terminus: Serine/threonine-protein phosphatase 2A regulatory subunit B'' subunit gamma (453 aa).

2 consecutive EF-hand domains span residues 273–308 (PSAL…TMTN) and 341–376 (KEPA…IQEL). Ca(2+) contacts are provided by Asp286, Asp288, Asn290, Met292, and Glu297.

Interacts with MCM3AP/GANP, PPP5C, and the phosphatase 2A core enzyme composed of the PPP2CA catalytic subunit and the constant regulatory subunit PPP2R1A. Finds in a complex with ABCB1, TFPI2 and PPP2R3C; leading to the dephosphorylation of ABCB1.

Its subcellular location is the nucleus. The protein localises to the cytoplasm. In terms of biological role, may regulate MCM3AP phosphorylation through phosphatase recruitment. May act as a negative regulator of ABCB1 expression and function through the dephosphorylation of ABCB1 by TFPI2/PPP2R3C complex. May play a role in the activation-induced cell death of B-cells. In Bos taurus (Bovine), this protein is Serine/threonine-protein phosphatase 2A regulatory subunit B'' subunit gamma (PPP2R3C).